The following is a 64-amino-acid chain: Large ribosomal subunit protein uL29 (64 aa).

It belongs to the universal ribosomal protein uL29 family.

This Maridesulfovibrio salexigens (strain ATCC 14822 / DSM 2638 / NCIMB 8403 / VKM B-1763) (Desulfovibrio salexigens) protein is Large ribosomal subunit protein uL29.